Consider the following 632-residue polypeptide: 2-oxoacid:ferredoxin oxidoreductase subunit alpha (632 aa).

The short motif at 254–258 is the YPITP motif element; that stretch reads YPITP. Residues Thr-257 and Arg-345 each contribute to the substrate site.

As to quaternary structure, heterodimer composed of an alpha and a beta subunit.

It catalyses the reaction a 2-oxocarboxylate + 2 oxidized [2Fe-2S]-[ferredoxin] + CoA = an acyl-CoA + 2 reduced [2Fe-2S]-[ferredoxin] + CO2 + H(+). In terms of biological role, catalyzes the coenzyme A-dependent oxidative decarboxylation of different 2-oxoacids such as 2-oxoglutarate, pyruvate and 2-oxobutyrate to form their CoA derivatives. This chain is 2-oxoacid:ferredoxin oxidoreductase subunit alpha, found in Saccharolobus solfataricus (Sulfolobus solfataricus).